The chain runs to 2647 residues: Filamin-A (2647 aa).

Residues 1–15 (MSSSHSRAGQSAAGA) are compositionally biased toward low complexity. Residues 1 to 39 (MSSSHSRAGQSAAGAAPGGGVDTRDAEMPATEKDLAEDA) form a disordered region. Serine 2 carries the post-translational modification N-acetylserine. The interval 2–274 (SSSHSRAGQS…PKAKLKPGAP (273 aa)) is actin-binding. A Phosphoserine modification is found at serine 11. The segment covering 22 to 39 (DTRDAEMPATEKDLAEDA) has biased composition (basic and acidic residues). Residues lysine 42, lysine 43, and lysine 135 each participate in a glycyl lysine isopeptide (Lys-Gly) (interchain with G-Cter in ubiquitin) cross-link. 2 consecutive Calponin-homology (CH) domains span residues 43-149 (KIQQ…LHYS) and 166-269 (QTPK…KAKL). The interval 271–294 (PGAPLRPKLNPKKARAYGPGIEPT) is disordered. Filamin repeat units lie at residues 276 to 374 (RPKL…EVYV), 376 to 474 (KSQG…TVTV), 475 to 570 (GQAC…EVKV), 571 to 663 (GTEC…MADI), 667 to 763 (PQDF…RVNV), 764 to 866 (GAGS…RVKV), 867 to 965 (EPSH…SVAV), 966 to 1061 (SPSL…PLEA), 1062 to 1154 (VAPT…KAHV), 1155 to 1249 (VPCF…KLQV), 1250 to 1349 (EPAV…QVPV), 1350 to 1442 (TEGC…KVPV), 1443 to 1539 (HDVT…KVKV), 1540 to 1636 (LPTH…RVRA), and 1649 to 1740 (VSIG…QVTA). Lysine 299 is covalently cross-linked (Glycyl lysine isopeptide (Lys-Gly) (interchain with G-Cter in SUMO1); alternate). A Glycyl lysine isopeptide (Lys-Gly) (interchain with G-Cter in SUMO2); alternate cross-link involves residue lysine 299. Residues lysine 376 and lysine 508 each carry the N6-acetyllysine modification. N6-acetyllysine occurs at positions 700, 781, 837, 865, and 906. Serine 968 and serine 1055 each carry phosphoserine. Position 1071 is an N6-acetyllysine; alternate (lysine 1071). At lysine 1071 the chain carries N6-succinyllysine; alternate. A phosphoserine mark is found at serine 1081 and serine 1084. A Phosphothreonine modification is found at threonine 1089. Phosphoserine is present on residues serine 1301 and serine 1338. A disordered region spans residues 1361–1382 (HGPGIQSGTTNKPNKFTVETRG). Position 1372 is an N6-acetyllysine (lysine 1372). 2 positions are modified to phosphoserine: serine 1459 and serine 1533. The segment at 1490–1607 (PKGLVEPVDV…DNHDGTYTVA (118 aa)) is interaction with furin. Lysine 1538 carries the post-translational modification N6-acetyllysine. Serine 1630 and serine 1734 each carry phosphoserine. The tract at residues 1741-1778 (LAGDQPSVQPPLRSQQLAPQYTYAQGGQQTWAPERPLV) is hinge 1. Filamin repeat units follow at residues 1779–1860 (GVNG…QFYV), 1861–1950 (DYVN…PFTA), 1951–2039 (RVTG…PVVI), 2042–2131 (SEIG…SPFS), 2132–2230 (VKVT…QFTV), 2233–2325 (LGEG…VVPV), 2327–2420 (SPSG…KIRV), and 2424–2516 (GHGG…KAKV). Phosphoserine is present on serine 1835. A phosphoserine mark is found at serine 1967, serine 2053, serine 2128, serine 2152, serine 2158, serine 2163, serine 2180, serine 2284, serine 2327, and serine 2329. Threonine 2336 bears the Phosphothreonine mark. Residues serine 2338, serine 2370, serine 2414, serine 2510, serine 2523, and serine 2526 each carry the phosphoserine modification. The interval 2517–2551 (TGPRLVSNHSLHETSSVFVDSLTKATCAPQHGAPG) is hinge 2. Residues 2517 to 2647 (TGPRLVSNHS…PGSPYRVVVP (131 aa)) are self-association site, tail. The Filamin 24 repeat unit spans residues 2552-2646 (PGPADASKVV…IPGSPYRVVV (95 aa)). Position 2569 is an N6-acetyllysine; alternate (lysine 2569). Lysine 2569 is modified (N6-succinyllysine; alternate). An N6-acetyllysine modification is found at lysine 2575. Residue threonine 2599 is modified to Phosphothreonine. 2 positions are modified to N6-acetyllysine: lysine 2607 and lysine 2621.

The protein belongs to the filamin family. In terms of assembly, homodimer. Interacts with PDLIM2. Interacts with RFLNA and RFLNB. Interacts with FCGR1A, FLNB, FURIN, HSPB7, INPPL1, KCND2, MYOT, MYOZ1, ARHGAP24, PSEN1, PSEN2 and ECSCR. Also interacts with various other binding partners in addition to filamentous actin. Interacts (via N-terminus) with MIS18BP1 (via N-terminus). Interacts (via N-terminus) with TAF1B. Interacts with TMEM67 (via C-terminus) and MKS1. Interacts (via actin-binding domain) with MICALL2 (via CH domain). Interacts (via filamin repeat 5) with SYK; docks SYK to the plasma membrane. Interacts (via filamin repeats 19 and 21) with DRD3; increased PKA-mediated phosphorylation at Ser-2152. Interacts (via filamin repeat 21) with MAS1, AGTR1 and ADRA1D; increases PKA-mediated phosphorylation of FLNA at Ser-2152. Interacts (via filamin repeats 4, 9, 12, 17, 19, 21, and 23) with GP1BA (high affinity), ITGB7, ITGB2 and FBLIM1. Interacts with CEACAM1 (via cytoplasmic domain); inhibits cell migration and cell scattering by interfering with the interaction between FLNA and RALA. Interacts with FOXC1. Interacts (via calponin-homology (CH) domain 1 and filamin repeat 24) with CRMP1; the interaction alters FLNA ternary structure and thus promotes FLNA dissociation from F-actin. Interacts with DPYSL3/CRMP3 and DPYSL4/CRMP4. As to quaternary structure, interacts with integrin ITGB1 isoform 1/beta-1A and isoform 5/beta-1D. Interacts with LUZP1; the interaction is not necessary for colocalization of LUZP1 with F-actin. Phosphorylation at Ser-2152 is negatively regulated by the autoinhibited conformation of filamin repeats 19-21. Ligand binding induces a conformational switch triggering phosphorylation at Ser-2152 by PKA. Post-translationally, phosphorylation extent changes in response to cell activation. In terms of processing, polyubiquitination in the CH1 domain by a SCF-like complex containing ASB2 leads to proteasomal degradation. Prior dissociation from actin may be required to expose the target lysines. Ubiquitinated in endothelial cells by RNF213 downstream of the non-canonical Wnt signaling pathway, leading to its degradation by the proteasome. In terms of tissue distribution, ubiquitous.

Its subcellular location is the cytoplasm. The protein localises to the cell cortex. It localises to the cytoskeleton. The protein resides in the perikaryon. It is found in the cell projection. Its subcellular location is the growth cone. The protein localises to the podosome. Promotes orthogonal branching of actin filaments and links actin filaments to membrane glycoproteins. Anchors various transmembrane proteins to the actin cytoskeleton and serves as a scaffold for a wide range of cytoplasmic signaling proteins. Interaction with FLNB may allow neuroblast migration from the ventricular zone into the cortical plate. Tethers cell surface-localized furin, modulates its rate of internalization and directs its intracellular trafficking. Involved in ciliogenesis. Plays a role in cell-cell contacts and adherens junctions during the development of blood vessels, heart and brain organs. Plays a role in platelets morphology through interaction with SYK that regulates ITAM- and ITAM-like-containing receptor signaling, resulting in by platelet cytoskeleton organization maintenance. During the axon guidance process, required for growth cone collapse induced by SEMA3A-mediated stimulation of neurons. The chain is Filamin-A (FLNA) from Homo sapiens (Human).